The sequence spans 65 residues: Large ribosomal subunit protein bL35 (65 aa).

Over residues 1-43 (MPKMKTRRGAAKRFAKTGSGKFKRRKQGLRHILTKKTAKRKSR) the composition is skewed to basic residues. The disordered stretch occupies residues 1 to 49 (MPKMKTRRGAAKRFAKTGSGKFKRRKQGLRHILTKKTAKRKSRLGQSAT).

Belongs to the bacterial ribosomal protein bL35 family.

This chain is Large ribosomal subunit protein bL35, found in Maridesulfovibrio salexigens (strain ATCC 14822 / DSM 2638 / NCIMB 8403 / VKM B-1763) (Desulfovibrio salexigens).